The following is a 435-amino-acid chain: MDVNSPETTEKHLNEVSADAAKPNVPNPNDELLRRNPSSFPNLRIKIPTSSFSTFDGSSGYSPSRLQLRPPWPSLKRAAANPFSRQNKRRQGAGNVRIDDFSGGTGSDSDEAVEHYGGEENRAIERPEQSSRSMSEETVSSELEEEPQKVFTHTVTSWSNGFTVDDSSLKTLDDPENATFLEIISSMESPRELGQVRVQVKIISREEENYTESQAGSDSASTKPPPALAMRAKESAIERSEQSSKVLSGETDSAELQEQQQEDQPYEVVTYTVTIWRNGFTVDDDPFKSLDDPENAAFLEYMPEDNKFGVPTTTRSTSCSSQTHQELQTLAGSESTSTEPPLTTTQPPSMSSLVVDPAAPTTSIQLILADSTRIVTQFNTHHTIRDIRCFIDTSRPDGSKDYQLLIMGSPPTPLSDFDQTIEKAGIANSVLVQKF.

Disordered regions lie at residues 1 to 150, 208 to 265, and 311 to 352; these read MDVN…PQKV, ENYT…EDQP, and PTTT…SMSS. A compositionally biased stretch (low complexity) spans 49–62; sequence TSSFSTFDGSSGYS. Basic and acidic residues predominate over residues 112–129; sequence AVEHYGGEENRAIERPEQ. Low complexity predominate over residues 130–141; the sequence is SSRSMSEETVSS. Positions 150-211 constitute an SEP 1 domain; the sequence is VFTHTVTSWS…IISREEENYT (62 aa). Over residues 211-222 the composition is skewed to polar residues; it reads TESQAGSDSAST. The segment covering 231–242 has biased composition (basic and acidic residues); the sequence is RAKESAIERSEQ. The span at 252–265 shows a compositional bias: acidic residues; it reads DSAELQEQQQEDQP. In terms of domain architecture, SEP 2 spans 268 to 343; that stretch reads VVTYTVTIWR…ESTSTEPPLT (76 aa). 2 stretches are compositionally biased toward low complexity: residues 312-323 and 333-349; these read TTTRSTSCSSQT and SEST…QPPS. Residues 357 to 434 form the UBX domain; that stretch reads PAAPTTSIQL…GIANSVLVQK (78 aa).

The polypeptide is Plant UBX domain-containing protein 6 (Arabidopsis thaliana (Mouse-ear cress)).